An 875-amino-acid polypeptide reads, in one-letter code: Probable serine/threonine-protein kinase samkC (875 aa).

Polar residues predominate over residues 1-12 (METTTITSILDD). A disordered region spans residues 1–47 (METTTITSILDDNNNNNNNNNNNNNNNNNNNNNNNNNNNNNNNNNYN). Positions 13-45 (NNNNNNNNNNNNNNNNNNNNNNNNNNNNNNNNN) are enriched in low complexity. Positions 51–116 (WDNEMVCKWL…SEFDDLKNIF (66 aa)) constitute an SAM domain. Residues 135-162 (DNNNLNNLNNNNNNNNNNNNNNNNNNNN) are a coiled coil. Positions 136–168 (NNNLNNLNNNNNNNNNNNNNNNNNNNNNNNNNN) are enriched in low complexity. The segment at 136–170 (NNNLNNLNNNNNNNNNNNNNNNNNNNNNNNNNNKT) is disordered. The Protein kinase domain occupies 181–452 (YVFIKQMKGS…SKQLLNFSWF (272 aa)). ATP-binding positions include 187–195 (MKGSVNCSL) and K210. D301 serves as the catalytic Proton acceptor. Disordered stretches follow at residues 331–362 (NNND…NDTN) and 461–718 (SEPQ…NNNN). The segment covering 474-554 (PQTSQSKPKP…KPKPSSSLSS (81 aa)) has biased composition (low complexity). The span at 555-564 (EPPPLEPQPK) shows a compositional bias: pro residues. Low complexity-rich tracts occupy residues 565-581 (PQTS…LSSS), 589-611 (QPTQ…SQPT), and 617-653 (QPKS…QQQK). The stretch at 626 to 655 (QSKQQQQQQQQQQQQQQQQQQQQQQQQKSK) forms a coiled coil. A compositionally biased stretch (basic and acidic residues) spans 654–663 (SKPEQSKSKP). Low complexity predominate over residues 664–718 (EQSQSKPQPGQPLQSPSKPQPIPSTTKTTTTTTTTTTPNNNNNNNNNNNNNNNNN). Residues 842 to 862 (TLILYTFYYFLSNTLIYQIIL) traverse the membrane as a helical segment.

The protein belongs to the protein kinase superfamily. Ser/Thr protein kinase family.

The protein resides in the membrane. The catalysed reaction is L-seryl-[protein] + ATP = O-phospho-L-seryl-[protein] + ADP + H(+). The enzyme catalyses L-threonyl-[protein] + ATP = O-phospho-L-threonyl-[protein] + ADP + H(+). In Dictyostelium discoideum (Social amoeba), this protein is Probable serine/threonine-protein kinase samkC (samkC).